Consider the following 628-residue polypeptide: Leucine-rich repeat and fibronectin type-III domain-containing protein 3 (628 aa).

A signal peptide spans 1–16; the sequence is MAVLPLLLCLLPLAPA. Topologically, residues 17-540 are extracellular; that stretch reads SSPPQPASPS…APHAPFLGGT (524 aa). The LRRNT domain occupies 19–59; it reads PPQPASPSPCPRRCRCQTQSLPLSVLCPGAGLLFVPPSLDR. LRR repeat units follow at residues 60-83, 84-105, 108-129, 132-153, 157-178, 181-202, and 205-226; these read RAAE…ANMT, GLLH…AFSD, ALRA…QLRG, NLRH…ALDD, TLED…ALGR, NVNT…AFSR, and KLAR…PLFS. An LRRCT domain is found at 249–295; that stretch reads NPLHCNCELVWLRRLAREDDLEACASPPALGGRYFWAVGEEEFVCEP. The region spanning 295 to 382 is the Ig-like domain; the sequence is PPVVTHRSPP…GEATAAVELT (88 aa). A disulfide bond links Cys317 and Cys366. 2 N-linked (GlcNAc...) asparagine glycosylation sites follow: Asn348 and Asn393. The tract at residues 380 to 433 is disordered; the sequence is ELTVGPPPPPQLANSTSCDPPRDGEPDALTPPSAASASASAKAAEAGPPTDRGV. The span at 410 to 428 shows a compositional bias: low complexity; that stretch reads PPSAASASASAKAAEAGPP. Residues 427 to 525 form the Fibronectin type-III domain; the sequence is PPTDRGVQVT…GCNRFSTEPA (99 aa). Residues 541-561 traverse the membrane as a helical segment; that stretch reads MIIALGGVIVASVLVFIFVLL. At 562-628 the chain is on the cytoplasmic side; it reads MRYKVHGGQP…WGPSHEPMGP (67 aa). A disordered region spans residues 570-609; sequence QPPGKTKASAPVSSVCSQTNGALGPMPAPPAPEPSAPRAH. A compositionally biased stretch (polar residues) spans 580-590; that stretch reads PVSSVCSQTNG. Positions 595 to 604 are enriched in pro residues; the sequence is MPAPPAPEPS.

This sequence belongs to the LRFN family. In terms of assembly, can form heteromeric complexes with LRFN1, LRFN2, LRFN4 and LRFN5. Able to form homomeric complexes across cell junctions, between adjacent cells. Does not interact with DLG4. In terms of processing, N-glycosylated.

It localises to the cell membrane. The protein resides in the cell projection. Its subcellular location is the axon. The protein localises to the dendrite. It is found in the synapse. It localises to the presynaptic cell membrane. The protein resides in the postsynaptic cell membrane. In terms of biological role, cell adhesion molecule that mediates homophilic cell-cell adhesion in a Ca(2+)-independent manner. Promotes neurite outgrowth in hippocampal neurons. The protein is Leucine-rich repeat and fibronectin type-III domain-containing protein 3 (LRFN3) of Bos taurus (Bovine).